Reading from the N-terminus, the 88-residue chain is Cell division topological specificity factor (88 aa).

It belongs to the MinE family.

Its function is as follows. Prevents the cell division inhibition by proteins MinC and MinD at internal division sites while permitting inhibition at polar sites. This ensures cell division at the proper site by restricting the formation of a division septum at the midpoint of the long axis of the cell. The protein is Cell division topological specificity factor of Aeromonas salmonicida (strain A449).